We begin with the raw amino-acid sequence, 251 residues long: MGQKVNPTGFRLGIIRDWTSRWYDDSPVIAEKLKQDHVIRNYVQARLKRERAGIAKIVIERTTKHIKINIFAARPGAVVGRKGEEINNLSQELSRITGREVKIDVIEVIKPEIEAQLIGENIAYQLENRVSFRRAMKQAIQQAMRAGAEGIRIRCAGRLGGVEIARSEQYKEGKIPLHTLRANVDYASVTAHTIAGAIGIKVWVYKGEVLVQRIDAIEEDELKKIKDRRGEQRSRGRDSRNRRRRKPRQTT.

The KH type-2 domain occupies 39–109 (IRNYVQARLK…EVKIDVIEVI (71 aa)). Over residues 222–239 (LKKIKDRRGEQRSRGRDS) the composition is skewed to basic and acidic residues. A disordered region spans residues 222–251 (LKKIKDRRGEQRSRGRDSRNRRRRKPRQTT). Basic residues predominate over residues 240 to 251 (RNRRRRKPRQTT).

It belongs to the universal ribosomal protein uS3 family. As to quaternary structure, part of the 30S ribosomal subunit. Forms a tight complex with proteins S10 and S14.

Binds the lower part of the 30S subunit head. Binds mRNA in the 70S ribosome, positioning it for translation. This Prosthecochloris aestuarii (strain DSM 271 / SK 413) protein is Small ribosomal subunit protein uS3.